A 216-amino-acid chain; its full sequence is UDP-N-acetylglucosamine transferase subunit ALG14 (216 aa).

The Lumenal portion of the chain corresponds to 1–3 (MVC). Residues 4–24 (VLTLAASAGGLAVLLIVRLWA) form a helical membrane-spanning segment. Over 25 to 216 (VLRSHPVTPR…PKSVYLGRIV (192 aa)) the chain is Cytoplasmic.

It belongs to the ALG14 family. As to quaternary structure, forms with ALG13 the active heterodimeric UDP-N-acetylglucosamine transferase complex.

It localises to the endoplasmic reticulum membrane. Its function is as follows. Part of the UDP-N-acetylglucosamine transferase complex that operates in the biosynthetic pathway of dolichol-linked oligosaccharides, the glycan precursors employed in protein asparagine (N)-glycosylation. The assembly of dolichol-linked oligosaccharides begins on the cytosolic side of the endoplasmic reticulum membrane and finishes in its lumen. The sequential addition of sugars to dolichol pyrophosphate produces dolichol-linked oligosaccharides containing fourteen sugars, including two GlcNAcs, nine mannoses and three glucoses. Once assembled, the oligosaccharides are transferred from the lipid to nascent proteins by oligosaccharyltransferases. Functions as a protein-membrane adapter recruiting ALG13 at the cytoplasmic face of the endoplasmic reticulum, where the complex catalyzes the second step of dolichol pyrophosphate biosynthesis, transferring a beta1,4-linked N-acetylglucosamine (GlcNAc) from UDP-GlcNAc to GlcNAc-pyrophosphatedolichol (Gn-PDol) to produce N,N'-diacetylchitobiosyl diphosphodolichol. N,N'-diacetylchitobiosyl diphosphodolichol is a substrate for ALG1, the following enzyme in the biosynthetic pathway. This is UDP-N-acetylglucosamine transferase subunit ALG14 from Rattus norvegicus (Rat).